The primary structure comprises 350 residues: Histidinol-phosphate aminotransferase (350 aa).

N6-(pyridoxal phosphate)lysine is present on Lys209.

This sequence belongs to the class-II pyridoxal-phosphate-dependent aminotransferase family. Histidinol-phosphate aminotransferase subfamily. As to quaternary structure, homodimer. Pyridoxal 5'-phosphate serves as cofactor.

It catalyses the reaction L-histidinol phosphate + 2-oxoglutarate = 3-(imidazol-4-yl)-2-oxopropyl phosphate + L-glutamate. The protein operates within amino-acid biosynthesis; L-histidine biosynthesis; L-histidine from 5-phospho-alpha-D-ribose 1-diphosphate: step 7/9. The sequence is that of Histidinol-phosphate aminotransferase from Christiangramia forsetii (strain DSM 17595 / CGMCC 1.15422 / KT0803) (Gramella forsetii).